We begin with the raw amino-acid sequence, 244 residues long: Small ribosomal subunit protein uS3 (244 aa).

The KH type-2 domain maps to 39–107 (VREMLRKKLA…PAHINVTEVR (69 aa)). The segment at 213–244 (VGQEKQDDSPRNDRNDRGDRGDRPSRPAREAR) is disordered. The segment covering 216–244 (EKQDDSPRNDRNDRGDRGDRPSRPAREAR) has biased composition (basic and acidic residues).

This sequence belongs to the universal ribosomal protein uS3 family. In terms of assembly, part of the 30S ribosomal subunit. Forms a tight complex with proteins S10 and S14.

In terms of biological role, binds the lower part of the 30S subunit head. Binds mRNA in the 70S ribosome, positioning it for translation. The protein is Small ribosomal subunit protein uS3 of Xanthomonas axonopodis pv. citri (strain 306).